The following is a 313-amino-acid chain: Desiccation-related protein PCC13-62 (313 aa).

The signal sequence occupies residues 1–26; that stretch reads MAQQPTFASAALVSFFLALICSCSYA.

This Craterostigma plantagineum (Blue gem) protein is Desiccation-related protein PCC13-62.